The following is a 346-amino-acid chain: Dihydroorotase (346 aa).

Residues H17 and H19 each contribute to the Zn(2+) site. Substrate is bound by residues 19-21 and N45; that span reads HLR. The Zn(2+) site is built by K103, H140, and H178. K103 is modified (N6-carboxylysine). Residue H140 coordinates substrate. L223 is a binding site for substrate. D251 contributes to the Zn(2+) binding site. Residue D251 is part of the active site. Residues H255 and A267 each contribute to the substrate site.

Belongs to the metallo-dependent hydrolases superfamily. DHOase family. Class II DHOase subfamily. In terms of assembly, homodimer. The cofactor is Zn(2+).

It carries out the reaction (S)-dihydroorotate + H2O = N-carbamoyl-L-aspartate + H(+). The protein operates within pyrimidine metabolism; UMP biosynthesis via de novo pathway; (S)-dihydroorotate from bicarbonate: step 3/3. Catalyzes the reversible cyclization of carbamoyl aspartate to dihydroorotate. The polypeptide is Dihydroorotase (Synechococcus sp. (strain RCC307)).